Consider the following 298-residue polypeptide: Acetylglutamate kinase (298 aa).

Substrate contacts are provided by residues 69 to 70 (GG), R91, and N196.

It belongs to the acetylglutamate kinase family. ArgB subfamily.

It localises to the cytoplasm. It catalyses the reaction N-acetyl-L-glutamate + ATP = N-acetyl-L-glutamyl 5-phosphate + ADP. Its pathway is amino-acid biosynthesis; L-arginine biosynthesis; N(2)-acetyl-L-ornithine from L-glutamate: step 2/4. Functionally, catalyzes the ATP-dependent phosphorylation of N-acetyl-L-glutamate. The polypeptide is Acetylglutamate kinase (Rhodopseudomonas palustris (strain BisB18)).